We begin with the raw amino-acid sequence, 434 residues long: Probable G-protein coupled receptor B0563.6 (434 aa).

An N-linked (GlcNAc...) asparagine glycan is attached at Asn-12. Transmembrane regions (helical) follow at residues Val-30–Ala-50 and Leu-65–Leu-85. A glycan (N-linked (GlcNAc...) asparagine) is linked at Asn-88. 2 helical membrane-spanning segments follow: residues Leu-105–Ser-125 and Ala-147–Ile-167. Asn-181 is a glycosylation site (N-linked (GlcNAc...) asparagine). The next 2 membrane-spanning stretches (helical) occupy residues Ile-208–Phe-228 and Gly-258–Ile-278. Residues Asn-429 and Asn-430 are each glycosylated (N-linked (GlcNAc...) asparagine).

The protein belongs to the G-protein coupled receptor 1 family.

Its subcellular location is the cell membrane. Not known. Putative receptor. The polypeptide is Probable G-protein coupled receptor B0563.6 (Caenorhabditis elegans).